The sequence spans 86 residues: Exodeoxyribonuclease 7 small subunit (86 aa).

The protein belongs to the XseB family. In terms of assembly, heterooligomer composed of large and small subunits.

It is found in the cytoplasm. The catalysed reaction is Exonucleolytic cleavage in either 5'- to 3'- or 3'- to 5'-direction to yield nucleoside 5'-phosphates.. Bidirectionally degrades single-stranded DNA into large acid-insoluble oligonucleotides, which are then degraded further into small acid-soluble oligonucleotides. This Bacillus licheniformis (strain ATCC 14580 / DSM 13 / JCM 2505 / CCUG 7422 / NBRC 12200 / NCIMB 9375 / NCTC 10341 / NRRL NRS-1264 / Gibson 46) protein is Exodeoxyribonuclease 7 small subunit.